The primary structure comprises 287 residues: Lys-63-specific deubiquitinase (287 aa).

An MPN domain is found at valine 33–glutamine 176. Residues histidine 119, histidine 121, and aspartate 132 each contribute to the Zn(2+) site. The JAMM motif signature appears at histidine 119–aspartate 132. Residues leucine 256–glutamate 283 adopt a coiled-coil conformation.

It belongs to the peptidase M67A family. BRCC36 subfamily. As to quaternary structure, monomer. Homodimer. Component of the BRISC complex, at least composed of abraxas2, brcc3, babam1 and babam2. Interacts with abraxas2; the interaction is direct and may form a heterotetramer. Component of the BRCA1-A complex. Both the BRCA1-A complex and the BRISC complex bind polyubiquitin. Requires Zn(2+) as cofactor.

The protein resides in the nucleus. Its subcellular location is the cytoplasm. The protein localises to the cytoskeleton. It localises to the spindle pole. Its function is as follows. Metalloprotease that specifically cleaves 'Lys-63'-linked polyubiquitin chains, leaving the last ubiquitin chain attached to its substrates. Catalytic subunit of the BRISC complex, a multiprotein complex that specifically cleaves 'Lys-63'-linked ubiquitin in various substrates; brcc3 does not have activity by itself, but needs to be associated into a higher-order assembly, for minimal in vitro activity. This chain is Lys-63-specific deubiquitinase, found in Danio rerio (Zebrafish).